Reading from the N-terminus, the 263-residue chain is MLPQDPSTEPTPADDAAPVDSAGQASAPSPADPEGVAHPRRIRSFVRRAGRTSTGQQRAIDEVGPRMMVPYAPQPLDWEATFGRKAPSILEIGFGMGETTAHIAGLRPQDNFLGCEVHEPGVGALLKLIDERGLANVRILQHDAVEVIAHMLTDDCLDGVHIYFPDPWHKKRHNKRRLVQPPLVKVLAARLKPGGYIHCATDWEEYAHQMLEVLSGEPLLENTSTAADGFAERPDYRPVTKFERRGVRLGHGVWDVVFRKRAA.

Residues 1–10 are compositionally biased toward polar residues; sequence MLPQDPSTEP. The segment at 1-38 is disordered; it reads MLPQDPSTEPTPADDAAPVDSAGQASAPSPADPEGVAH. S-adenosyl-L-methionine-binding residues include Glu91, Glu116, Asp143, and Asp166. Asp166 is an active-site residue. Lys170 is a binding site for substrate. The segment at 172-177 is interaction with RNA; the sequence is RHNKRR. Substrate-binding positions include Asp202 and 240–243; that span reads TKFE.

It belongs to the class I-like SAM-binding methyltransferase superfamily. TrmB family.

It catalyses the reaction guanosine(46) in tRNA + S-adenosyl-L-methionine = N(7)-methylguanosine(46) in tRNA + S-adenosyl-L-homocysteine. It participates in tRNA modification; N(7)-methylguanine-tRNA biosynthesis. In terms of biological role, catalyzes the formation of N(7)-methylguanine at position 46 (m7G46) in tRNA. This Cupriavidus necator (strain ATCC 17699 / DSM 428 / KCTC 22496 / NCIMB 10442 / H16 / Stanier 337) (Ralstonia eutropha) protein is tRNA (guanine-N(7)-)-methyltransferase.